Consider the following 276-residue polypeptide: Mitochondrial outer membrane protein porin of 34 kDa (276 aa).

It belongs to the eukaryotic mitochondrial porin (TC 1.B.8.1) family.

The protein localises to the mitochondrion outer membrane. In terms of biological role, forms a channel through the cell membrane that allows diffusion of small hydrophilic molecules. The channel adopts an open conformation at low or zero membrane potential and a closed conformation at potentials above 30-40 mV. The open state has a weak anion selectivity whereas the closed state is cation-selective. In Solanum tuberosum (Potato), this protein is Mitochondrial outer membrane protein porin of 34 kDa.